The primary structure comprises 276 residues: Type II pantothenate kinase (276 aa).

ATP is bound at residue Asp-8 to Lys-15. The active-site Proton acceptor is the Glu-76. ATP-binding positions include Thr-105, Gly-127–Met-131, Phe-143, and Ser-230.

Belongs to the type II pantothenate kinase family. Homodimer.

The protein localises to the cytoplasm. The enzyme catalyses (R)-pantothenate + ATP = (R)-4'-phosphopantothenate + ADP + H(+). Its pathway is cofactor biosynthesis; coenzyme A biosynthesis; CoA from (R)-pantothenate: step 1/5. Functionally, catalyzes the phosphorylation of pantothenate (Pan), the first step in CoA biosynthesis. The polypeptide is Type II pantothenate kinase (Bacillus thuringiensis subsp. konkukian (strain 97-27)).